The following is a 301-amino-acid chain: Fluoroquinolones export ATP-binding protein Rv2688c (301 aa).

An ABC transporter domain is found at 18–246 (IRVRGLTFRY…RSRRRVRVEY (229 aa)). Residue 52-59 (GPSGAGKS) coordinates ATP.

This sequence belongs to the ABC transporter superfamily. As to quaternary structure, the complex is composed of 2 ATP-binding proteins (Rv2688c) and 2 transmembrane proteins (Rv2686c and Rv2687c).

It is found in the cell membrane. With respect to regulation, inhibited by reserpine and verapamil. Functionally, part of the ABC transporter complex Rv2686c/Rv2687c/Rv2688c involved in fluoroquinolones export. Confers resistance to ciprofloxacin and, to a lesser extent, norfloxacin, moxifloxacin and sparfloxacin. Probably responsible for energy coupling to the transport system. This chain is Fluoroquinolones export ATP-binding protein Rv2688c, found in Mycobacterium tuberculosis (strain ATCC 25618 / H37Rv).